Consider the following 374-residue polypeptide: MPTLNTSASPPTFFWANASGGSVLSADDAPMPVKFLALRLMVALAYGLVGAIGLLGNLAVLWVLSNCARRAPGPPSDTFVFNLALADLGLALTLPFWAAESALDFHWPFGGALCKMVLTATVLNVYASIFLITALSVARYWVVAMAAGPGTHLSLFWARIATLAVWAAAALVTVPTAVFGVEGEVCGVRLCLLRFPSRYWLGAYQLQRVVLAFMVPLGVITTSYLLLLAFLQRRQRRRQDSRVVARSVRILVASFFLCWFPNHVVTLWGVLVKFDLVPWNSTFYTIQTYVFPVTTCLAHSNSCLNPVLYCLLRREPRQALAGTFRDLRLRLWPQGGGWVQQVALKQVGRRWVASNPRESRPSTLLTNLDRGTPG.

Over 1-43 (MPTLNTSASPPTFFWANASGGSVLSADDAPMPVKFLALRLMVA) the chain is Extracellular. Asparagine 5 and asparagine 17 each carry an N-linked (GlcNAc...) asparagine glycan. Residues 44 to 64 (LAYGLVGAIGLLGNLAVLWVL) form a helical membrane-spanning segment. The Cytoplasmic portion of the chain corresponds to 65 to 78 (SNCARRAPGPPSDT). A helical membrane pass occupies residues 79-99 (FVFNLALADLGLALTLPFWAA). At 100 to 116 (ESALDFHWPFGGALCKM) the chain is on the extracellular side. The cysteines at positions 114 and 191 are disulfide-linked. Residues 117–137 (VLTATVLNVYASIFLITALSV) form a helical membrane-spanning segment. Over 138–154 (ARYWVVAMAAGPGTHLS) the chain is Cytoplasmic. A helical transmembrane segment spans residues 155–175 (LFWARIATLAVWAAAALVTVP). Over 176-209 (TAVFGVEGEVCGVRLCLLRFPSRYWLGAYQLQRV) the chain is Extracellular. A helical membrane pass occupies residues 210-230 (VLAFMVPLGVITTSYLLLLAF). The Cytoplasmic portion of the chain corresponds to 231 to 249 (LQRRQRRRQDSRVVARSVR). The chain crosses the membrane as a helical span at residues 250–270 (ILVASFFLCWFPNHVVTLWGV). Residues 271-281 (LVKFDLVPWNS) are Extracellular-facing. A helical transmembrane segment spans residues 282-302 (TFYTIQTYVFPVTTCLAHSNS). Residues 303 to 374 (CLNPVLYCLL…LTNLDRGTPG (72 aa)) are Cytoplasmic-facing.

Belongs to the G-protein coupled receptor 1 family. In terms of tissue distribution, expressed in a broader range of tissues including brain, kidney, testis, thymus, placenta, prostate, salivary gland, thyroid and colon.

Its subcellular location is the cell membrane. In terms of biological role, high affinity receptor for INSL5. Also acts as a receptor for RLN3/relaxin-3, as well as bradykinin and kallidin. Binding of the ligand inhibit cAMP accumulation. This Homo sapiens (Human) protein is Relaxin-3 receptor 2 (RXFP4).